The sequence spans 221 residues: Transcription antitermination protein NusB (221 aa).

This sequence belongs to the NusB family.

Functionally, involved in transcription antitermination. Required for transcription of ribosomal RNA (rRNA) genes. Binds specifically to the boxA antiterminator sequence of the ribosomal RNA (rrn) operons. The chain is Transcription antitermination protein NusB from Synechocystis sp. (strain ATCC 27184 / PCC 6803 / Kazusa).